The sequence spans 562 residues: Undecaprenyl phosphate-alpha-4-amino-4-deoxy-L-arabinose arabinosyl transferase (562 aa).

A run of 12 helical transmembrane segments spans residues 14–34 (IKFSITIIAFILLYYLIPLNY), 91–111 (FSVRFGSFLFTLFSANLIYLF), 120–140 (ILSLNSVIIFLSILLVYIIGT), 142–162 (SVLDSIISFWINLSMISFWLA), 186–206 (FITKGFISLLIPFISIFIWLF), 215–235 (TIIHCFFSLLISILIIFPWIY), 267–287 (PFWYYFPIFIIGCLPWSGFLF), 302–322 (IEFYLLLWIIVQFCFFSISKG), 324–344 (LPTYILPCFFPLSILIAKNIE), 354–374 (LLKINSIINTIVGSTLLIFII), 395–415 (LILCIFSIFVWIFLNLCIIFN), and 425–445 (LSIIGIAFLFGLYVPEKIIYA).

It belongs to the glycosyltransferase 83 family.

Its subcellular location is the cell inner membrane. The catalysed reaction is 4-amino-4-deoxy-alpha-L-arabinopyranosyl di-trans,octa-cis-undecaprenyl phosphate + lipid IVA = lipid IIA + di-trans,octa-cis-undecaprenyl phosphate.. It participates in lipopolysaccharide metabolism; 4-amino-4-deoxy-beta-L-arabinose-lipid A biosynthesis. Its function is as follows. Catalyzes the transfer of the L-Ara4N moiety of the glycolipid undecaprenyl phosphate-alpha-L-Ara4N to lipid A. The modified arabinose is attached to lipid A and is required for resistance to polymyxin and cationic antimicrobial peptides. The chain is Undecaprenyl phosphate-alpha-4-amino-4-deoxy-L-arabinose arabinosyl transferase from Wigglesworthia glossinidia brevipalpis.